Consider the following 568-residue polypeptide: Adenine deaminase (568 aa).

It belongs to the metallo-dependent hydrolases superfamily. Adenine deaminase family. Mn(2+) is required as a cofactor.

The enzyme catalyses adenine + H2O + H(+) = hypoxanthine + NH4(+). This chain is Adenine deaminase, found in Clostridium perfringens (strain ATCC 13124 / DSM 756 / JCM 1290 / NCIMB 6125 / NCTC 8237 / Type A).